We begin with the raw amino-acid sequence, 691 residues long: MELRSTAAPRAEGYSNVGFQNEENFLENENTSGNNSIRSRAVQSREHTNTKQDEEQVTVEQDSPRNREHMEDDDEEMQQKGCLERRYDTVCGFCRKHKTTLRHIIWGILLAGYLVMVISACVLNFHRALPLFVITVAAIFFVVWDHLMAKYEHRIDEMLSPGRRLLNSHWFWLKWVIWSSLVLAVIFWLAFDTAKLGQQQLVSFGGLIMYIVLLFLFSKYPTRVYWRPVLWGIGLQFLLGLLILRTDPGFIAFDWLGRQVQTFLEYTDAGASFVFGEKYKDHFFAFKVLPIVVFFSTVMSMLYYLGLMQWIIRKVGWIMLVTTGSSPIESVVASGNIFVGQTESPLLVRPYLPYITKSELHAIMTAGFSTIAGSVLGAYISFGVPSSHLLTASVMSAPASLAAAKLFWPETEKPKITLKNAMKMESGDSGNLLEAATQGASSSISLVANIAVNLIAFLALLSFMNSALSWFGNMFDYPQLSFELICSYIFMPFSFMMGVEWQDSFMVARLIGYKTFFNEFVAYEHLSKWIHLRKEGGPKFVNGVQQYISIRSEIIATYALCGFANIGSLGIVIGGLTSMAPSRKRDIASGAVRALIAGTVACFMTACIAGILSSTPVDINCHHVLENAFNSTFPGNTTKVIACCQSLLSSTVAKGPGEVIPGGNHSLYSLKGCCTLLNPSTFNCNGISNTF.

Positions 1-78 (MELRSTAAPR…HMEDDDEEMQ (78 aa)) are disordered. Over 1–102 (MELRSTAAPR…FCRKHKTTLR (102 aa)) the chain is Cytoplasmic. A compositionally biased stretch (low complexity) spans 21-30 (NEENFLENEN). The segment covering 31-42 (TSGNNSIRSRAV) has biased composition (polar residues). The segment covering 43 to 54 (QSREHTNTKQDE) has biased composition (basic and acidic residues). The chain crosses the membrane as a helical span at residues 103–123 (HIIWGILLAGYLVMVISACVL). Topologically, residues 124–128 (NFHRA) are extracellular. A helical membrane pass occupies residues 129-149 (LPLFVITVAAIFFVVWDHLMA). Residues 150–173 (KYEHRIDEMLSPGRRLLNSHWFWL) lie on the Cytoplasmic side of the membrane. The helical transmembrane segment at 174–194 (KWVIWSSLVLAVIFWLAFDTA) threads the bilayer. At 195-197 (KLG) the chain is on the extracellular side. A helical membrane pass occupies residues 198 to 219 (QQQLVSFGGLIMYIVLLFLFSK). Residues 220 to 227 (YPTRVYWR) lie on the Cytoplasmic side of the membrane. Residues 228-247 (PVLWGIGLQFLLGLLILRTD) traverse the membrane as a helical segment. The Extracellular portion of the chain corresponds to 248-284 (PGFIAFDWLGRQVQTFLEYTDAGASFVFGEKYKDHFF). Residues 285–305 (AFKVLPIVVFFSTVMSMLYYL) form a helical membrane-spanning segment. At 306-329 (GLMQWIIRKVGWIMLVTTGSSPIE) the chain is on the cytoplasmic side. An intramembrane region (helical) is located at residues 330–348 (SVVASGNIFVGQTESPLLV). Topologically, residues 349 to 361 (RPYLPYITKSELH) are cytoplasmic. The chain crosses the membrane as a helical span at residues 362-384 (AIMTAGFSTIAGSVLGAYISFGV). Residues 385–386 (PS) lie on the Extracellular side of the membrane. Residues 387–408 (SHLLTASVMSAPASLAAAKLFW) traverse the membrane as a helical segment. The Cytoplasmic segment spans residues 409-443 (PETEKPKITLKNAMKMESGDSGNLLEAATQGASSS). Residues 444-469 (ISLVANIAVNLIAFLALLSFMNSALS) traverse the membrane as a helical segment. Residues 470 to 507 (WFGNMFDYPQLSFELICSYIFMPFSFMMGVEWQDSFMV) lie on the Extracellular side of the membrane. The helical intramembrane region spans 508–527 (ARLIGYKTFFNEFVAYEHLS). The Extracellular segment spans residues 528–566 (KWIHLRKEGGPKFVNGVQQYISIRSEIIATYALCGFANI). Residues 567 to 577 (GSLGIVIGGLT) form a helical membrane-spanning segment. Topologically, residues 578–590 (SMAPSRKRDIASG) are cytoplasmic. The helical transmembrane segment at 591–613 (AVRALIAGTVACFMTACIAGILS) threads the bilayer. Residues 614-691 (STPVDINCHH…FNCNGISNTF (78 aa)) are Extracellular-facing.

Belongs to the concentrative nucleoside transporter (CNT) (TC 2.A.41) family. Homotrimer. In terms of tissue distribution, expressed in pancreas, bone marrow, trachea, mammary gland, liver, prostate, and regions of intestine, brain, lung, placenta, testis, kidney, and heart.

Its subcellular location is the cell membrane. The protein localises to the endoplasmic reticulum membrane. It carries out the reaction thymidine(out) + 2 Na(+)(out) = thymidine(in) + 2 Na(+)(in). It catalyses the reaction cytidine(out) + 2 Na(+)(out) = cytidine(in) + 2 Na(+)(in). The catalysed reaction is uridine(out) + 2 Na(+)(out) = uridine(in) + 2 Na(+)(in). The enzyme catalyses adenosine(out) + 2 Na(+)(out) = adenosine(in) + 2 Na(+)(in). It carries out the reaction guanosine(out) + 2 Na(+)(out) = guanosine(in) + 2 Na(+)(in). It catalyses the reaction inosine(out) + 2 Na(+)(out) = inosine(in) + 2 Na(+)(in). Functionally, sodium-dependent, pyrimidine- and purine-selective. Involved in the homeostasis of endogenous nucleosides. Exhibits the transport characteristics of the nucleoside transport system cib or N3 subtype (N3/cib) (with marked transport of both thymidine and inosine). Employs a 2:1 sodium/nucleoside ratio. Transports uridine. Also able to transport gemcitabine, 3'-azido-3'-deoxythymidine (AZT), ribavirin and 3-deazauridine. This Homo sapiens (Human) protein is Solute carrier family 28 member 3 (SLC28A3).